The primary structure comprises 116 residues: Large ribosomal subunit protein bL17 (116 aa).

It belongs to the bacterial ribosomal protein bL17 family. In terms of assembly, part of the 50S ribosomal subunit. Contacts protein L32.

This Prochlorococcus marinus (strain MIT 9515) protein is Large ribosomal subunit protein bL17.